A 354-amino-acid polypeptide reads, in one-letter code: Uroporphyrinogen decarboxylase (354 aa).

Substrate is bound by residues 27–31 (RQAGR), D77, Y154, T209, and H327.

The protein belongs to the uroporphyrinogen decarboxylase family. In terms of assembly, homodimer.

The protein resides in the cytoplasm. It carries out the reaction uroporphyrinogen III + 4 H(+) = coproporphyrinogen III + 4 CO2. Its pathway is porphyrin-containing compound metabolism; protoporphyrin-IX biosynthesis; coproporphyrinogen-III from 5-aminolevulinate: step 4/4. Catalyzes the decarboxylation of four acetate groups of uroporphyrinogen-III to yield coproporphyrinogen-III. The protein is Uroporphyrinogen decarboxylase of Salmonella dublin (strain CT_02021853).